Here is a 524-residue protein sequence, read N- to C-terminus: Lycopene epsilon cyclase, chloroplastic (524 aa).

A chloroplast-targeting transit peptide spans 1–45; sequence MECVGARNFAAMAVSTFPSWSCRRKFPVVKRYSYRNIRFGLCSVR. 111–139 provides a ligand contact to NAD(+); the sequence is LVVIGCGPAGLALAAESAKLGLKVGLIGP. 2 helical membrane-spanning segments follow: residues 441-461 and 475-495; these read FFLF…RSFF and FLGS…MFVI.

This sequence belongs to the lycopene cyclase family.

The protein resides in the plastid. The protein localises to the chloroplast membrane. It carries out the reaction a carotenoid psi-end group = a carotenoid epsilon-end group. It functions in the pathway carotenoid biosynthesis; alpha-zeacarotene biosynthesis. It participates in carotenoid biosynthesis; delta-carotene biosynthesis. Its function is as follows. Involved in carotenoid biosynthesis. Catalyzes the single epsilon-cyclization reaction which converts lycopene to delta-carotene and neurosporene to alpha-zeacarotene. Required for lutein biosynthesis. The chain is Lycopene epsilon cyclase, chloroplastic from Arabidopsis thaliana (Mouse-ear cress).